A 248-amino-acid chain; its full sequence is DNA-directed RNA polymerase subunit Rpo3 (248 aa).

Belongs to the archaeal Rpo3/eukaryotic RPB3 RNA polymerase subunit family. In terms of assembly, part of the RNA polymerase complex.

It is found in the cytoplasm. The catalysed reaction is RNA(n) + a ribonucleoside 5'-triphosphate = RNA(n+1) + diphosphate. DNA-dependent RNA polymerase (RNAP) catalyzes the transcription of DNA into RNA using the four ribonucleoside triphosphates as substrates. The protein is DNA-directed RNA polymerase subunit Rpo3 of Halobacterium salinarum (strain ATCC 29341 / DSM 671 / R1).